The following is a 681-amino-acid chain: Pentatricopeptide repeat-containing protein At2g22410, mitochondrial (681 aa).

The transit peptide at 1–32 directs the protein to the mitochondrion; it reads MNISKAKLLLLPPPLTPKLNRSLYSHSQRRTR. PPR repeat units follow at residues 117–151, 155–189, 190–220, 221–255, 256–290, 291–321, 322–356, 357–387, 388–422, 423–453, 454–488, 489–519, and 525–555; these read NIFSWNVTIRGFSESENPKESFLLYKQMLRHGCCE, DHFTYPVLFKVCADLRLSSLGHMILGHVLKLRLEL, VSHVHNASIHMFASCGDMENARKVFDESPVR, DLVSWNCLINGYKKIGEAEKAIYVYKLMESEGVKP, DDVTMIGLVSSCSMLGDLNRGKEFYEYVKENGLRM, TIPLVNALMDMFSKCGDIHEARRIFDNLEKR, TIVSWTTMISGYARCGLLDVSRKLFDDMEEKDVVL, WNAMIGGSVQAKRGQDALALFQEMQTSNTKP, DEITMIHCLSACSQLGALDVGIWIHRYIEKYSLSL, NVALGTSLVDMYAKCGNISEALSVFHGIQTR, NSLTYTAIIGGLALHGDASTAISYFNEMIDAGIAP, DEITFIGLLSACCHGGMIQTGRDYFSQMKSR, and QLKHYSIMVDLLGRAGLLEEADRLMESMPME. Residues 560 to 635 are type E motif; the sequence is VWGALLFGCR…IPGCSSIEVN (76 aa). The segment at 636-666 is type E(+) motif; that stretch reads GIVCEFIVRDKSRPESEKIYDRLHCLGRHMR.

The protein belongs to the PPR family. PCMP-E subfamily.

The protein localises to the mitochondrion. This Arabidopsis thaliana (Mouse-ear cress) protein is Pentatricopeptide repeat-containing protein At2g22410, mitochondrial (PCMP-E28).